Consider the following 174-residue polypeptide: Disulfide bond formation protein B (174 aa).

The Cytoplasmic portion of the chain corresponds to 1–17 (MSFQVVTGWLDNSPRRI). A helical membrane pass occupies residues 18–34 (FAFVSLASIGMLAFGQY). The Periplasmic segment spans residues 35-52 (LQHVVGLEPCPMCIVQRY). Cys-44 and Cys-47 form a disulfide bridge. The chain crosses the membrane as a helical span at residues 53–67 (ALVLVAIIAGLTGAS). Residues 68-74 (GRKGLHL) are Cytoplasmic-facing. A helical transmembrane segment spans residues 75–92 (GGAVLMLGSSGFGAYVAA). The Periplasmic portion of the chain corresponds to 93 to 148 (RQSWLQWYPPEVVSCGRDFYGMIETFPLQRAIPMIFKGSGDCSKVDWTFLGGSIAN). Residues Cys-107 and Cys-134 are joined by a disulfide bond. A helical membrane pass occupies residues 149–167 (WTFVVFGLIVLLSLALIWR). The Cytoplasmic portion of the chain corresponds to 168 to 174 (RVSRRVS).

It belongs to the DsbB family.

The protein localises to the cell inner membrane. In terms of biological role, required for disulfide bond formation in some periplasmic proteins. Acts by oxidizing the DsbA protein. This chain is Disulfide bond formation protein B, found in Albidiferax ferrireducens (strain ATCC BAA-621 / DSM 15236 / T118) (Rhodoferax ferrireducens).